Consider the following 353-residue polypeptide: Sphingosine 1-phosphate receptor 2 (353 aa).

At 1 to 34 (MGSLYSEYLNPNKVQEHYNYTKETLETQETTSRQ) the chain is on the extracellular side. N-linked (GlcNAc...) asparagine glycosylation is present at Asn-19. The helical transmembrane segment at 35–59 (VASAFIVILCCAIVVENLLVLIAVA) threads the bilayer. Over 60–66 (RNSKFHS) the chain is Cytoplasmic. A helical membrane pass occupies residues 67–95 (AMYLFLGNLAASDLLAGVAFVANTLLSGS). Residues 96 to 109 (VTLRLTPVQWFARE) lie on the Extracellular side of the membrane. A helical membrane pass occupies residues 110–128 (GSAFITLSASVFSLLAIAI). Residues 129 to 147 (ERHVAIAKVKLYGSDKSCR) lie on the Cytoplasmic side of the membrane. Residues 148–173 (MLLLIGASWLISLVLGGLPILGWNCL) form a helical membrane-spanning segment. Residues 174-189 (GHLEACSTVLPLYAKH) lie on the Extracellular side of the membrane. Residues 190 to 210 (YVLCVVTIFSIILLAIVALYV) traverse the membrane as a helical segment. Over 211 to 233 (RIYCVVRSSHADMAAPQTLALLK) the chain is Cytoplasmic. The helical transmembrane segment at 234-255 (TVTIVLGVFIVCWLPAFSILLL) threads the bilayer. At 256–271 (DYACPVHSCPILYKAH) the chain is on the extracellular side. Residues 272–292 (YFFAVSTLNSLLNPVIYTWRS) traverse the membrane as a helical segment. Residues 293 to 353 (RDLRREVLRP…PTFLEGNTVV (61 aa)) lie on the Cytoplasmic side of the membrane. Cys-305 carries S-palmitoyl cysteine lipidation.

The protein belongs to the G-protein coupled receptor 1 family.

The protein localises to the cell membrane. Functionally, receptor for the lysosphingolipid sphingosine 1-phosphate (S1P). S1P is a bioactive lysophospholipid that elicits diverse physiological effects on most types of cells and tissues. When expressed in rat HTC4 hepatoma cells, is capable of mediating S1P-induced cell proliferation and suppression of apoptosis. Receptor for the chemokine-like protein FAM19A5. Mediates the inhibitory effect of FAM19A5 on vascular smooth muscle cell proliferation and migration. In lymphoid follicles, couples the binding of S1P to the activation of GNA13 and downstream inhibition of AKT activation leading to suppression of germinal center (GC) B cell growth and migration outside the GC niche. The sequence is that of Sphingosine 1-phosphate receptor 2 (S1PR2) from Homo sapiens (Human).